Here is a 184-residue protein sequence, read N- to C-terminus: Gremlin-1 (184 aa).

Positions 1-24 (MNRTAYTVGALLLLLGTLLPTAEG) are cleaved as a signal peptide. Positions 23-77 (EGKKKGSQGAIPPPDKAQHNDSEQTQSPPQPGSRTRGRGQGRGTAMPGEEVLESS) are disordered. Residue N42 is glycosylated (N-linked (GlcNAc...) asparagine). 4 cysteine pairs are disulfide-bonded: C94–C144, C108–C158, C118–C176, and C122–C178. One can recognise a CTCK domain in the interval 94-184 (CKTQPLKQTI…QCRCISIDLD (91 aa)).

The protein belongs to the DAN family. As to quaternary structure, homodimer; can also form homooligomers. Interacts with BMP2; can form higher oligomers with BMP2. Interacts with SLIT1 and SLIT2 in a glycosylation-dependent manner. As to expression, highly expressed in spleen and to a lesser extent in lung, skeletal muscle and kidney. Expressed only in non-transformed cells or primary fibroblasts in culture but not in established transformed or tumor derived cell lines. Broadly expressed in limb bud mesenchyme but restricted to the distal limb bud mesenchyme and concentrated posteriorly. Expressed in ovary especially in granulosa cells of follicles of type 4.

It localises to the secreted. In terms of biological role, cytokine that may play an important role during carcinogenesis and metanephric kidney organogenesis, as BMP a antagonist required for early limb outgrowth and patterning in maintaining the FGF4-SHH feedback loop. Down-regulates the BMP4 signaling in a dose-dependent manner. Antagonist of BMP2; inhibits BMP2-mediated differentiation of osteoblasts (in vitro). Acts as inhibitor of monocyte chemotaxis. The protein is Gremlin-1 (Grem1) of Mus musculus (Mouse).